The chain runs to 361 residues: Phospho-N-acetylmuramoyl-pentapeptide-transferase (361 aa).

10 consecutive transmembrane segments (helical) span residues 27–47 (GAFFTALIFGFIFGRPLINLL), 72–92 (TPTMGGLLILSALTLATLLWA), 98–118 (YVWLVLFVTVSFGLIGFMDDF), 135–155 (LAMGFGIAGIAGAGALLLHPE), 169–189 (TLINLSILFIPFCMIVIAGSA), 200–220 (GLAIMPVMIAAGTLGVIAYAV), 240–260 (IFVFTSALIGGGLGFLWYNAP), 263–283 (AVFMGDTGSLALGGALGAIAV), 289–309 (IVLVVVGGIFVVEALSVIIQV), and 338–358 (QIVIRFWIISLILALIGLATL).

It belongs to the glycosyltransferase 4 family. MraY subfamily. Mg(2+) is required as a cofactor.

The protein resides in the cell inner membrane. It catalyses the reaction UDP-N-acetyl-alpha-D-muramoyl-L-alanyl-gamma-D-glutamyl-meso-2,6-diaminopimeloyl-D-alanyl-D-alanine + di-trans,octa-cis-undecaprenyl phosphate = di-trans,octa-cis-undecaprenyl diphospho-N-acetyl-alpha-D-muramoyl-L-alanyl-D-glutamyl-meso-2,6-diaminopimeloyl-D-alanyl-D-alanine + UMP. Its pathway is cell wall biogenesis; peptidoglycan biosynthesis. Its function is as follows. Catalyzes the initial step of the lipid cycle reactions in the biosynthesis of the cell wall peptidoglycan: transfers peptidoglycan precursor phospho-MurNAc-pentapeptide from UDP-MurNAc-pentapeptide onto the lipid carrier undecaprenyl phosphate, yielding undecaprenyl-pyrophosphoryl-MurNAc-pentapeptide, known as lipid I. This chain is Phospho-N-acetylmuramoyl-pentapeptide-transferase, found in Dinoroseobacter shibae (strain DSM 16493 / NCIMB 14021 / DFL 12).